We begin with the raw amino-acid sequence, 139 residues long: Translation initiation factor 2 subunit beta (139 aa).

This sequence belongs to the eIF-2-beta/eIF-5 family. As to quaternary structure, heterotrimer composed of an alpha, a beta and a gamma chain.

Its function is as follows. eIF-2 functions in the early steps of protein synthesis by forming a ternary complex with GTP and initiator tRNA. This Saccharolobus solfataricus (strain ATCC 35092 / DSM 1617 / JCM 11322 / P2) (Sulfolobus solfataricus) protein is Translation initiation factor 2 subunit beta.